The primary structure comprises 267 residues: Strigolactone esterase RMS3 (267 aa).

Ser96 functions as the Nucleophile in the catalytic mechanism. Active-site residues include Asp218 and His247.

Belongs to the AB hydrolase superfamily.

It is found in the cytoplasm. Its subcellular location is the nucleus. Functionally, involved in strigolactone signaling pathway. Functions downstream of strigolactone synthesis, as a component of hormone signaling and as an enzyme that participates in the conversion of strigolactones to the bioactive form. Binds and hydrolyzes the synthetic strigolactone analog GR24 and its enantiomers in vitro. Forms a stable covalent complex with the D-ring of strigolactone, which is essential for hormone bioactivity. The D-ring is attached to His-247 of the catalytic triad. The hydrolysis of strigolactone into a covalently linked intermediate molecule is required to trigger strigolactone signaling. This mechanism defines RMS3 as a non-canonical hormone receptor with dual functions to generate and sense the active form of strigolactone. Strigolactones are hormones that inhibit tillering and shoot branching through the MAX-dependent pathway, contribute to the regulation of shoot architectural response to phosphate-limiting conditions and function as rhizosphere signal that stimulates hyphal branching of arbuscular mycorrhizal fungi and trigger seed germination of root parasitic weeds. The polypeptide is Strigolactone esterase RMS3 (Pisum sativum (Garden pea)).